Here is a 309-residue protein sequence, read N- to C-terminus: tRNA dimethylallyltransferase (309 aa).

Residue 9–16 (GPTAVGKT) participates in ATP binding. 11 to 16 (TAVGKT) provides a ligand contact to substrate. The tract at residues 34-37 (DSMQ) is interaction with substrate tRNA.

This sequence belongs to the IPP transferase family. In terms of assembly, monomer. Mg(2+) serves as cofactor.

It catalyses the reaction adenosine(37) in tRNA + dimethylallyl diphosphate = N(6)-dimethylallyladenosine(37) in tRNA + diphosphate. Functionally, catalyzes the transfer of a dimethylallyl group onto the adenine at position 37 in tRNAs that read codons beginning with uridine, leading to the formation of N6-(dimethylallyl)adenosine (i(6)A). The sequence is that of tRNA dimethylallyltransferase from Clostridium acetobutylicum (strain ATCC 824 / DSM 792 / JCM 1419 / IAM 19013 / LMG 5710 / NBRC 13948 / NRRL B-527 / VKM B-1787 / 2291 / W).